The primary structure comprises 408 residues: MSLSVTRENFDEWMVPVYVPAPFIPVRGEGSRLWDQQGKEYIDFAGGIAVNALGHAHPALREALNEQANRFWHTGNGYTNEPALRLAKKLIDATFAERVFFCNSGAEANEAALKLARKYAHDRVGNHKSGIVAFKNAFHGRTLFTVSAGGQPTYSQDFAPLPPDIRHAAYNDLNSASALIDDNTCAVIVEPVQGEGGVIPATKAFLQGLRELCDRHQALLIFDEVQTGVGRTGELYAYMHYGVTPDILTTAKALGGGFPIGAMLTTQDYASVMTPGTHGTTYGGNPLATAVAGKVLDIINTPEMQNGVRQRHDAFIERLNTINVRFGMFSEIRGLGLLLGCVLQTEFAGKAKLIAQEAAKAGVMVLIAGGDVVRFAPALNVSDEEIATGLDRFALACERLQAGGASCG.

The residue at position 252 (K252) is an N6-(pyridoxal phosphate)lysine.

The protein belongs to the class-III pyridoxal-phosphate-dependent aminotransferase family. AstC subfamily. The cofactor is pyridoxal 5'-phosphate.

The catalysed reaction is N(2)-succinyl-L-ornithine + 2-oxoglutarate = N-succinyl-L-glutamate 5-semialdehyde + L-glutamate. Its pathway is amino-acid degradation; L-arginine degradation via AST pathway; L-glutamate and succinate from L-arginine: step 3/5. In terms of biological role, catalyzes the transamination of N(2)-succinylornithine and alpha-ketoglutarate into N(2)-succinylglutamate semialdehyde and glutamate. Can also act as an acetylornithine aminotransferase. This chain is Succinylornithine transaminase, found in Salmonella dublin (strain CT_02021853).